The sequence spans 568 residues: Urease subunit alpha (568 aa).

Positions 130-568 (GGIDTHIHFI…LPMAQRYFLF (439 aa)) constitute a Urease domain. Positions 135, 137, and 218 each coordinate Ni(2+). Position 218 is an N6-carboxylysine (Lys218). His220 lines the substrate pocket. Positions 247 and 273 each coordinate Ni(2+). The Proton donor role is filled by His321. Asp361 is a Ni(2+) binding site.

This sequence belongs to the metallo-dependent hydrolases superfamily. Urease alpha subunit family. Heterotrimer of UreA (gamma), UreB (beta) and UreC (alpha) subunits. Three heterotrimers associate to form the active enzyme. It depends on Ni cation as a cofactor. Post-translationally, carboxylation allows a single lysine to coordinate two nickel ions.

The protein resides in the cytoplasm. The enzyme catalyses urea + 2 H2O + H(+) = hydrogencarbonate + 2 NH4(+). It functions in the pathway nitrogen metabolism; urea degradation; CO(2) and NH(3) from urea (urease route): step 1/1. This chain is Urease subunit alpha, found in Burkholderia orbicola (strain MC0-3).